A 210-amino-acid chain; its full sequence is Large ribosomal subunit protein uL3 (210 aa).

It belongs to the universal ribosomal protein uL3 family. In terms of assembly, part of the 50S ribosomal subunit. Forms a cluster with proteins L14 and L19.

One of the primary rRNA binding proteins, it binds directly near the 3'-end of the 23S rRNA, where it nucleates assembly of the 50S subunit. This chain is Large ribosomal subunit protein uL3, found in Geobacter sulfurreducens (strain ATCC 51573 / DSM 12127 / PCA).